A 59-amino-acid chain; its full sequence is Photosystem II reaction center protein K (59 aa).

A propeptide spanning residues 1 to 22 (MLNIFSLICLNSALYPSSLFFA) is cleaved from the precursor. Residues 38–58 (MPVIPLFFFLLAFVWQAAVSF) traverse the membrane as a helical segment.

This sequence belongs to the PsbK family. As to quaternary structure, PSII is composed of 1 copy each of membrane proteins PsbA, PsbB, PsbC, PsbD, PsbE, PsbF, PsbH, PsbI, PsbJ, PsbK, PsbL, PsbM, PsbT, PsbX, PsbY, PsbZ, Psb30/Ycf12, at least 3 peripheral proteins of the oxygen-evolving complex and a large number of cofactors. It forms dimeric complexes.

It is found in the plastid. The protein resides in the chloroplast thylakoid membrane. Functionally, one of the components of the core complex of photosystem II (PSII). PSII is a light-driven water:plastoquinone oxidoreductase that uses light energy to abstract electrons from H(2)O, generating O(2) and a proton gradient subsequently used for ATP formation. It consists of a core antenna complex that captures photons, and an electron transfer chain that converts photonic excitation into a charge separation. This Lactuca sativa (Garden lettuce) protein is Photosystem II reaction center protein K.